The chain runs to 311 residues: tRNA-cytidine(32) 2-sulfurtransferase (311 aa).

The PP-loop motif signature appears at 47–52 (SGGKDS). Residues Cys-122, Cys-125, and Cys-213 each coordinate [4Fe-4S] cluster.

This sequence belongs to the TtcA family. In terms of assembly, homodimer. Requires Mg(2+) as cofactor. It depends on [4Fe-4S] cluster as a cofactor.

Its subcellular location is the cytoplasm. It carries out the reaction cytidine(32) in tRNA + S-sulfanyl-L-cysteinyl-[cysteine desulfurase] + AH2 + ATP = 2-thiocytidine(32) in tRNA + L-cysteinyl-[cysteine desulfurase] + A + AMP + diphosphate + H(+). It functions in the pathway tRNA modification. Its function is as follows. Catalyzes the ATP-dependent 2-thiolation of cytidine in position 32 of tRNA, to form 2-thiocytidine (s(2)C32). The sulfur atoms are provided by the cysteine/cysteine desulfurase (IscS) system. This chain is tRNA-cytidine(32) 2-sulfurtransferase, found in Klebsiella pneumoniae subsp. pneumoniae (strain ATCC 700721 / MGH 78578).